Reading from the N-terminus, the 317-residue chain is Serine/threonine-protein phosphatase PP1 isozyme 1 (317 aa).

4 residues coordinate Mn(2+): Asp75, His77, Asp103, and Asn135. The active-site Proton donor is the His136. Positions 184 and 259 each coordinate Mn(2+).

The protein belongs to the PPP phosphatase family. PP-1 subfamily. Requires Mn(2+) as cofactor.

The catalysed reaction is O-phospho-L-seryl-[protein] + H2O = L-seryl-[protein] + phosphate. The enzyme catalyses O-phospho-L-threonyl-[protein] + H2O = L-threonyl-[protein] + phosphate. This Nicotiana tabacum (Common tobacco) protein is Serine/threonine-protein phosphatase PP1 isozyme 1 (NPP1).